A 147-amino-acid polypeptide reads, in one-letter code: MSQNLDFLALAGRGGPHYASPTSRHPSPKVWNSTPPSLERGPSERQISPTPDQYTNPNRRRQPWKDWSPGRWQLLQNQRQSWGLSPTAPTRHKRTPEPKPFFRQPRGGATQVYGNHQPGSYRDISHYYSPSMLEDPWAALQAEAQYR.

A disordered region spans residues 1 to 119; sequence MSQNLDFLAL…TQVYGNHQPG (119 aa). 3 stretches are compositionally biased toward polar residues: residues 20-36, 45-57, and 74-88; these read SPTS…STPP, RQIS…YTNP, and LLQN…SPTA.

The protein is Gastrula-specific protein 17 (gs17) of Xenopus laevis (African clawed frog).